We begin with the raw amino-acid sequence, 302 residues long: NmrA-like family domain-containing protein DDB_G0286605 (302 aa).

NADP(+) is bound by residues 9–14, 35–39, 56–57, 78–80, K130, and 157–160; these read GGTGYQ, RNPES, DE, TNS, and YFQN.

It belongs to the NmrA-type oxidoreductase family.

May be a redox sensor protein. The protein is NmrA-like family domain-containing protein DDB_G0286605 of Dictyostelium discoideum (Social amoeba).